Consider the following 394-residue polypeptide: Aspergillopepsin-1 (394 aa).

The first 20 residues, 1 to 20 (MVVFSKTAALVLGLSTAVSA), serve as a signal peptide directing secretion. A propeptide spans 21-69 (APAPTRKGFTINQIARPANKTRTVNLPGLYARSLAKFGGTVPQSVKEAA) (activation peptide). Residues 85–391 (YLTPVTVGKS…NSEGPKLGFA (307 aa)) enclose the Peptidase A1 domain. Residues Asp-101 and Asp-283 contribute to the active site. An intrachain disulfide couples Cys-319 to Cys-354.

It belongs to the peptidase A1 family.

It is found in the secreted. It carries out the reaction Hydrolysis of proteins with broad specificity. Generally favors hydrophobic residues in P1 and P1', but also accepts Lys in P1, which leads to activation of trypsinogen. Does not clot milk.. Its function is as follows. Secreted aspartic endopeptidase that allows assimilation of proteinaceous substrates. The scissile peptide bond is attacked by a nucleophilic water molecule activated by two aspartic residues in the active site. Shows a broad primary substrate specificity. Favors hydrophobic residues at the P1 and P1' positions, but also accepts a lysine residue in the P1 position, leading to the activation of trypsinogen and chymotrypsinogen A. The protein is Aspergillopepsin-1 of Aspergillus niger.